Reading from the N-terminus, the 295-residue chain is Autophagy-related protein 37 (295 aa).

An ACB domain is found at 5–103 (VDRVFVHALN…LIDTMHRYAT (99 aa)). Disordered stretches follow at residues 124–162 (NSPS…PLKE) and 174–201 (LRSQ…RWQR). The span at 125–153 (SPSSSLSSPRPNQSTGAGAQQPQQEPEQA) shows a compositional bias: low complexity. Asparagine 136 carries an N-linked (GlcNAc...) asparagine glycan. The helical transmembrane segment at 244–264 (WLLVKHIFADLVILSVVLLWL) threads the bilayer.

The protein belongs to the ATG37 family.

It is found in the peroxisome membrane. In terms of biological role, acyl-CoA binding protein which acts as the peroxisome receptor for pexophagy. Required for both micropexophagy and macropexophagy, but not for the cytoplasm to vacuole transport (Cvt) or autophagy pathways. Required for functional micropexophagic apparatus (MIPA) and relocation of ATG11 to the peroxisome-sequestering arms of the vacuole. Binds palmitoyl-CoA but not oleyl-CoA. The sequence is that of Autophagy-related protein 37 from Gibberella zeae (strain ATCC MYA-4620 / CBS 123657 / FGSC 9075 / NRRL 31084 / PH-1) (Wheat head blight fungus).